The following is a 453-amino-acid chain: MINNLSVSMTKVLKIILTIIIILFNTLSILANTTTLSSIKITKGNCTQIPIAINFFSAKSNEEHDLSQNIVSIISNDLNISKIFAPISSDLFIETEQGVAHIPLFTAWSQINANILINGEITKIDSTDFKVTFVIWDVFSAKEITRKSFTFPSQLWRSTAHKIADQIYKHVTGSKGNFNTKIVYVSESNSSNRKIRRIAIMDQDGANHNYITNGKNHVITPVFSPKNNQILYVSYHNKIPTVRIHDLNSGNNKILASFNGITFSPRFSPDGNKILVSNSSTKNVTHIYEINLLTGKIKQLTKGQSINTSPSYSPDGSKIAFVSDRSGSTQIYIMNDQGGNIKRLTSQPGAYTTPAWSPTNNYIAFTKIEAGEFSIGVIKLDGSNKRIIATKYLVEGPSWAPDGKTIIFSRAYKATKSTSTKVKLYSVDYTGYNEREIQTPENASDPNWSNEYE.

An N-terminal signal peptide occupies residues 1 to 31 (MINNLSVSMTKVLKIILTIIIILFNTLSILA).

The protein belongs to the TolB family. In terms of assembly, the Tol-Pal system is composed of five core proteins: the inner membrane proteins TolA, TolQ and TolR, the periplasmic protein TolB and the outer membrane protein Pal. They form a network linking the inner and outer membranes and the peptidoglycan layer.

It is found in the periplasm. Functionally, part of the Tol-Pal system, which plays a role in outer membrane invagination during cell division and is important for maintaining outer membrane integrity. The protein is Tol-Pal system protein TolB of Orientia tsutsugamushi (strain Boryong) (Rickettsia tsutsugamushi).